Reading from the N-terminus, the 461-residue chain is MDYSYDEDLDELCPVCGDKVSGYHYGLLTCESCKGFFKRTVQNNKHYTCTESQSCKIDKTQRKRCPFCRFQKCLTVGMRLEAVRADRMRGGRNKFGPMYKRDRALKQQKKAQIRANGFKLETGPPMGVAPPPPPPPDYMLPPGLHAPEPKGLAAGPPTGPLGDFGAPTLPMAVPSAHGPLAGYLYPAFPGRAIKSEYPEPYASPPQPGPPYGYPEPFSGGPGVPELIVQLLQLEPDEDQVRARIVGCLQEPAKGRPDQPAPFSLLCRMADQTFISIVDWARRCMVFKELEVADQMTLLQNCWSELLVFDHIYRQIQHGKEGSILLVTGQEVELTTVAAQAGSLLHGLVLRAQELVLQLHALQLDRQEFVCLKFLILFSLDVKFLNNHSLVKDAQEKANAALLDYTLCHYPHCGDKFQQLLLCLVEVRALSMQAKEYLYHKHLGNEMPRNNLLIEMLQAKQT.

The segment at residues 10–85 (DELCPVCGDK…VGMRLEAVRA (76 aa)) is a DNA-binding region (nuclear receptor). An NR C4-type zinc finger spans residues 13–33 (CPVCGDKVSGYHYGLLTCESC). N6-acetyllysine is present on residues Lys34, Lys38, and Lys72. The segment at 49–73 (CTESQSCKIDKTQRKRCPFCRFQKC) adopts an NR C4-type zinc-finger fold. Lys119 participates in a covalent cross-link: Glycyl lysine isopeptide (Lys-Gly) (interchain with G-Cter in SUMO). The interval 119–150 (KLETGPPMGVAPPPPPPPDYMLPPGLHAPEPK) is disordered. The span at 127–139 (GVAPPPPPPPDYM) shows a compositional bias: pro residues. A Glycyl lysine isopeptide (Lys-Gly) (interchain with G-Cter in SUMO) cross-link involves residue Lys194. Residue Ser203 is modified to Phosphoserine; by CDK7. The region spanning 222-459 (GVPELIVQLL…NLLIEMLQAK (238 aa)) is the NR LBD domain. Residues 230-461 (LLQLEPDEDQ…LIEMLQAKQT (232 aa)) form an important for dimerization region. Gly341, Tyr436, and Lys440 together coordinate a 1,2-diacyl-sn-glycero-3-phosphocholine.

It belongs to the nuclear hormone receptor family. NR5 subfamily. As to quaternary structure, binds DNA as a monomer. Part of a complex consisting of SFPQ, NONO and NR5A1. Interacts with NR0B2, NCOA2 and PPARGC1A. Interacts with DGKQ and CDK7. Binds to and activated by HIPK3. Acetylation stimulates the transcriptional activity. Post-translationally, sumoylation reduces CDK7-mediated phosphorylation on Ser-203. In terms of processing, phosphorylated on Ser-203 by CDK7. This phosphorylation promotes transcriptional activity.

It is found in the nucleus. Its function is as follows. Transcriptional activator. Seems to be essential for sexual differentiation and formation of the primary steroidogenic tissues. Binds to the Ad4 site found in the promoter region of steroidogenic P450 genes such as CYP11A, CYP11B and CYP21B. Also regulates the AMH/Muellerian inhibiting substance gene as well as the AHCH and STAR genes. 5'-YCAAGGYC-3' and 5'-RRAGGTCA-3' are the consensus sequences for the recognition by NR5A1. The SFPQ-NONO-NR5A1 complex binds to the CYP17 promoter and regulates basal and cAMP-dependent transcriptional activity. Binds phosphatidylcholine and phospholipids with a phosphatidylinositol (PI) headgroup, in particular PI(3,4)P2 and PI(3,4,5)P3. Activated by the phosphorylation of NR5A1 by HIPK3 leading to increased steroidogenic gene expression upon cAMP signaling pathway stimulation. This Sus scrofa (Pig) protein is Steroidogenic factor 1 (NR5A1).